The sequence spans 256 residues: uncharacterized protein (256 aa).

An N-terminal signal peptide occupies residues 1-24; it reads MIKRVNKLVLGISLLFLVISITAG. A lipid anchor (N-palmitoyl cysteine) is attached at C25. Residue C25 is the site of S-diacylglycerol cysteine attachment.

It belongs to the staphylococcal tandem lipoprotein family.

It localises to the cell membrane. This is an uncharacterized protein from Staphylococcus aureus (strain NCTC 8325 / PS 47).